The sequence spans 179 residues: Photosystem I assembly protein Ycf4 (179 aa).

2 helical membrane-spanning segments follow: residues 21-41 (LISF…YLGV) and 59-79 (IVMT…LLNI).

The protein belongs to the Ycf4 family.

It localises to the plastid. The protein localises to the chloroplast thylakoid membrane. Seems to be required for the assembly of the photosystem I complex. The protein is Photosystem I assembly protein Ycf4 of Rhodomonas salina (Cryptomonas salina).